We begin with the raw amino-acid sequence, 1195 residues long: ATP-dependent DNA helicase Hel308 (1195 aa).

ATP is bound by residues glutamine 20 and 39-46 (IPTASGKT). The region spanning 26 to 196 (RGLLDKNKNF…WLNAELIVDD (171 aa)) is the Helicase ATP-binding domain. Positions 143–146 (DEIH) match the DEAH box motif. A DOD-type homing endonuclease domain is found at 451–584 (FIGYFIGDGY…LQFVLLRFGI (134 aa)).

The protein belongs to the helicase family. Hel308 subfamily. As to quaternary structure, monomer. This protein undergoes a protein self splicing that involves a post-translational excision of the intervening region (intein) followed by peptide ligation.

The catalysed reaction is Couples ATP hydrolysis with the unwinding of duplex DNA by translocating in the 3'-5' direction.. It catalyses the reaction ATP + H2O = ADP + phosphate + H(+). Its function is as follows. DNA-dependent ATPase and 3'-5' DNA helicase that may be involved in repair of stalled replication forks. The polypeptide is ATP-dependent DNA helicase Hel308 (Methanocaldococcus jannaschii (strain ATCC 43067 / DSM 2661 / JAL-1 / JCM 10045 / NBRC 100440) (Methanococcus jannaschii)).